The primary structure comprises 238 residues: Flagellar L-ring protein (238 aa).

The N-terminal stretch at 1–23 (MIKLFICQKKYYLTAIFLLTIQS) is a signal peptide. Cysteine 24 is lipidated: N-palmitoyl cysteine. Cysteine 24 carries the S-diacylglycerol cysteine lipid modification.

The protein belongs to the FlgH family. As to quaternary structure, the basal body constitutes a major portion of the flagellar organelle and consists of four rings (L,P,S, and M) mounted on a central rod.

The protein localises to the cell outer membrane. The protein resides in the bacterial flagellum basal body. Its function is as follows. Assembles around the rod to form the L-ring and probably protects the motor/basal body from shearing forces during rotation. The chain is Flagellar L-ring protein from Buchnera aphidicola subsp. Acyrthosiphon pisum (strain 5A).